The following is a 650-amino-acid chain: 1-deoxy-D-xylulose-5-phosphate synthase 2 (650 aa).

Thiamine diphosphate is bound by residues His79 and 120–122 (AHS). Asp151 contributes to the Mg(2+) binding site. Thiamine diphosphate contacts are provided by residues 152–153 (GS), Asn180, Tyr289, and Glu371. Asn180 serves as a coordination point for Mg(2+).

This sequence belongs to the transketolase family. DXPS subfamily. As to quaternary structure, homodimer. It depends on Mg(2+) as a cofactor. Thiamine diphosphate serves as cofactor.

It carries out the reaction D-glyceraldehyde 3-phosphate + pyruvate + H(+) = 1-deoxy-D-xylulose 5-phosphate + CO2. It participates in metabolic intermediate biosynthesis; 1-deoxy-D-xylulose 5-phosphate biosynthesis; 1-deoxy-D-xylulose 5-phosphate from D-glyceraldehyde 3-phosphate and pyruvate: step 1/1. In terms of biological role, catalyzes the acyloin condensation reaction between C atoms 2 and 3 of pyruvate and glyceraldehyde 3-phosphate to yield 1-deoxy-D-xylulose-5-phosphate (DXP). This chain is 1-deoxy-D-xylulose-5-phosphate synthase 2, found in Zymomonas mobilis subsp. mobilis (strain ATCC 31821 / ZM4 / CP4).